A 200-amino-acid chain; its full sequence is Large ribosomal subunit protein uL4 (200 aa).

The segment at 43-71 (RAQKTRAEVSGSGKKPWRQKGTGRARSGD) is disordered.

This sequence belongs to the universal ribosomal protein uL4 family. As to quaternary structure, part of the 50S ribosomal subunit.

Functionally, one of the primary rRNA binding proteins, this protein initially binds near the 5'-end of the 23S rRNA. It is important during the early stages of 50S assembly. It makes multiple contacts with different domains of the 23S rRNA in the assembled 50S subunit and ribosome. Its function is as follows. Forms part of the polypeptide exit tunnel. This Actinobacillus pleuropneumoniae serotype 5b (strain L20) protein is Large ribosomal subunit protein uL4.